Consider the following 318-residue polypeptide: tRNA dimethylallyltransferase (318 aa).

16 to 23 serves as a coordination point for ATP; sequence GPTASGKT. 18–23 provides a ligand contact to substrate; the sequence is TASGKT. 4 interaction with substrate tRNA regions span residues 41–44, 165–169, 246–251, and 279–286; these read DSAL, QRINR, RCVGYR, and KRQITWLR.

Belongs to the IPP transferase family. As to quaternary structure, monomer. It depends on Mg(2+) as a cofactor.

It carries out the reaction adenosine(37) in tRNA + dimethylallyl diphosphate = N(6)-dimethylallyladenosine(37) in tRNA + diphosphate. Functionally, catalyzes the transfer of a dimethylallyl group onto the adenine at position 37 in tRNAs that read codons beginning with uridine, leading to the formation of N6-(dimethylallyl)adenosine (i(6)A). This Actinobacillus succinogenes (strain ATCC 55618 / DSM 22257 / CCUG 43843 / 130Z) protein is tRNA dimethylallyltransferase.